We begin with the raw amino-acid sequence, 134 residues long: Large ribosomal subunit protein bL17 (134 aa).

This sequence belongs to the bacterial ribosomal protein bL17 family. As to quaternary structure, part of the 50S ribosomal subunit. Contacts protein L32.

This Colwellia psychrerythraea (strain 34H / ATCC BAA-681) (Vibrio psychroerythus) protein is Large ribosomal subunit protein bL17.